We begin with the raw amino-acid sequence, 251 residues long: Leucine-rich repeat and calponin homology domain-containing protein 1 (251 aa).

A disordered region spans residues 73–97 (SNGSEYSPNEIRANSPAISPTANST). S87 and S91 each carry phosphoserine. Positions 88-97 (PAISPTANST) are enriched in polar residues. Position 123 is a phosphothreonine (T123). One can recognise a Calponin-homology (CH) domain in the interval 131–244 (MREEKELVEH…ITVQALLDVT (114 aa)).

As to quaternary structure, interacts (via LRR repeats) with unphosphorylated DOCK8 (via DHR-2 domain); the interaction prevents the interaction between DOCK8 and CDC42.

It is found in the cytoplasm. In terms of biological role, acts as a negative regulator of GTPase CDC42 by sequestering CDC42-guanine exchange factor DOCK8. Probably by preventing CDC42 activation, negatively regulates CD4(+) T-cell migration. In Felis catus (Cat), this protein is Leucine-rich repeat and calponin homology domain-containing protein 1.